An 896-amino-acid chain; its full sequence is Chromatin assembly factor 1 subunit A-A (896 aa).

Disordered regions lie at residues 1–23 (MPGKEAAVNVMQSSTKSNTKKMV), 185–377 (TSTS…EEEK), and 552–610 (DSDE…DPEN). The span at 10–21 (VMQSSTKSNTKK) shows a compositional bias: polar residues. Residues 211–226 (ASVSSSSSPVSLSSPD) are compositionally biased toward low complexity. The segment covering 227-236 (AQTGSQFRNR) has biased composition (polar residues). The span at 237–246 (SSPSTSTTPT) shows a compositional bias: low complexity. Residues 255-284 (SADKNKTKDKDKQRQAEKEERERAKKEARS) show a composition bias toward basic and acidic residues. Residues 285–302 (AKKKKRQGLLKNLQRKRG) are compositionally biased toward basic residues. The segment covering 308-377 (SGKEYKKEKK…EEKRLKEEEK (70 aa)) has biased composition (basic and acidic residues). Composition is skewed to acidic residues over residues 552–563 (DSDEEWEEEEPG), 572–586 (ENDDDPKEDDEDDDG), and 595–607 (SDDEGVSDEECTD). Residues 642 to 678 (CVWWDSKASEISLLQKFSACILESPAVDEELAQEISS) are necessary for homodimerization, competence for chromatin assembly. The segment at 724-743 (SDAAGNESTSPNVTPQTPSN) is disordered. The segment covering 729–743 (NESTSPNVTPQTPSN) has biased composition (polar residues).

Belongs to the CHAF1A family. Homodimer.

It localises to the nucleus. Functionally, involved in chromatin assembly in DNA replication and DNA repair. The sequence is that of Chromatin assembly factor 1 subunit A-A (chaf1a-a) from Xenopus laevis (African clawed frog).